Here is a 197-residue protein sequence, read N- to C-terminus: NADH-quinone oxidoreductase subunit I 2 (197 aa).

4Fe-4S ferredoxin-type domains follow at residues 42 to 71 (GVIG…IDSH) and 91 to 120 (DRFA…WSPE). [4Fe-4S] cluster contacts are provided by Cys51, Cys54, Cys57, Cys61, Cys100, Cys103, Cys106, and Cys110. The interval 147 to 197 (APPALDPGAEEPKELAAARKAADKLAAQQQPDQPGPDHPGQPDESGQEGRT) is disordered. Residues 156-169 (EEPKELAAARKAAD) are compositionally biased toward basic and acidic residues.

This sequence belongs to the complex I 23 kDa subunit family. As to quaternary structure, NDH-1 is composed of 14 different subunits. Subunits NuoA, H, J, K, L, M, N constitute the membrane sector of the complex. It depends on [4Fe-4S] cluster as a cofactor.

The protein localises to the cell membrane. The catalysed reaction is a quinone + NADH + 5 H(+)(in) = a quinol + NAD(+) + 4 H(+)(out). Its function is as follows. NDH-1 shuttles electrons from NADH, via FMN and iron-sulfur (Fe-S) centers, to quinones in the respiratory chain. The immediate electron acceptor for the enzyme in this species is believed to be ubiquinone. Couples the redox reaction to proton translocation (for every two electrons transferred, four hydrogen ions are translocated across the cytoplasmic membrane), and thus conserves the redox energy in a proton gradient. In Streptomyces coelicolor (strain ATCC BAA-471 / A3(2) / M145), this protein is NADH-quinone oxidoreductase subunit I 2.